The primary structure comprises 289 residues: MEAKEQDVSLGANKFPERQPLGIAAQSQDEPKDYQEPPPAPLFEPSELTSWSFYRAGIAEFIATFLFLYITVLTVMGVVRESSKCKTVGIQGIAWAFGGMIFALVYCTAGISGGHINPAVTFGLFLARKLSLTRAIFYMVMQVLGAICGAGVVKGFEGKQRFGDLNGGANFVAPGYTKGDGLGAEIVGTFILVYTVFSATDAKRSARDSHVPILAPLPIGFAVFLVHLATIPITGTGINPARSLGAAIVFNKKIGWNDHWIFWVGPFIGAALAALYHQVVIRAIPFKSK.

Positions 1 to 39 are disordered; it reads MEAKEQDVSLGANKFPERQPLGIAAQSQDEPKDYQEPPP. At 1–57 the chain is on the cytoplasmic side; it reads MEAKEQDVSLGANKFPERQPLGIAAQSQDEPKDYQEPPPAPLFEPSELTSWSFYRAG. A helical transmembrane segment spans residues 58-78; the sequence is IAEFIATFLFLYITVLTVMGV. Over 79-91 the chain is Extracellular; sequence VRESSKCKTVGIQ. The helical transmembrane segment at 92–112 threads the bilayer; sequence GIAWAFGGMIFALVYCTAGIS. Residues 113-135 lie on the Cytoplasmic side of the membrane; sequence GGHINPAVTFGLFLARKLSLTRA. Positions 117–119 match the NPA 1 motif; it reads NPA. Residues 136 to 156 form a helical membrane-spanning segment; the sequence is IFYMVMQVLGAICGAGVVKGF. Residues 157 to 178 lie on the Extracellular side of the membrane; the sequence is EGKQRFGDLNGGANFVAPGYTK. The chain crosses the membrane as a helical span at residues 179–199; it reads GDGLGAEIVGTFILVYTVFSA. Residues 200-212 lie on the Cytoplasmic side of the membrane; it reads TDAKRSARDSHVP. The helical transmembrane segment at 213-233 threads the bilayer; it reads ILAPLPIGFAVFLVHLATIPI. At 234–260 the chain is on the extracellular side; the sequence is TGTGINPARSLGAAIVFNKKIGWNDHW. The short motif at 239-241 is the NPA 2 element; the sequence is NPA. The helical transmembrane segment at 261-281 threads the bilayer; it reads IFWVGPFIGAALAALYHQVVI. Topologically, residues 282–289 are cytoplasmic; sequence RAIPFKSK.

The protein belongs to the MIP/aquaporin (TC 1.A.8) family. PIP (TC 1.A.8.11) subfamily.

It is found in the cell membrane. In terms of biological role, aquaporins facilitate the transport of water and small neutral solutes across cell membranes. The protein is Probable aquaporin PIP-type 7a (TRG-31) of Pisum sativum (Garden pea).